The primary structure comprises 120 residues: Putative defensin-like protein 179 (120 aa).

An N-terminal signal peptide occupies residues 1-27 (MERTSTSLLFLLSLLIIFASAVNQIRA). Disulfide bonds link cysteine 37–cysteine 56, cysteine 40–cysteine 63, cysteine 44–cysteine 65, cysteine 74–cysteine 120, cysteine 85–cysteine 105, cysteine 90–cysteine 114, and cysteine 94–cysteine 116.

It belongs to the DEFL family.

The protein localises to the secreted. In Arabidopsis thaliana (Mouse-ear cress), this protein is Putative defensin-like protein 179 (LCR57).